A 376-amino-acid polypeptide reads, in one-letter code: Putative glutamate--cysteine ligase 2 (376 aa).

This sequence belongs to the glutamate--cysteine ligase type 2 family. YbdK subfamily.

It catalyses the reaction L-cysteine + L-glutamate + ATP = gamma-L-glutamyl-L-cysteine + ADP + phosphate + H(+). ATP-dependent carboxylate-amine ligase which exhibits weak glutamate--cysteine ligase activity. This Corynebacterium glutamicum (strain R) protein is Putative glutamate--cysteine ligase 2.